The primary structure comprises 445 residues: Putative ankyrin repeat protein L797 (445 aa).

ANK repeat units lie at residues 73–102 (FMED…DIYS), 285–314 (NHEH…ELVG), 315–344 (NLYI…DIRQ), and 346–375 (LDAF…IINI).

In Acanthamoeba polyphaga (Amoeba), this protein is Putative ankyrin repeat protein L797.